The sequence spans 140 residues: Nucleoside diphosphate kinase (140 aa).

ATP-binding residues include lysine 11, phenylalanine 59, arginine 87, threonine 93, arginine 104, and asparagine 114. Histidine 117 (pros-phosphohistidine intermediate) is an active-site residue.

It belongs to the NDK family. Homotetramer. Requires Mg(2+) as cofactor.

The protein resides in the cytoplasm. It catalyses the reaction a 2'-deoxyribonucleoside 5'-diphosphate + ATP = a 2'-deoxyribonucleoside 5'-triphosphate + ADP. The enzyme catalyses a ribonucleoside 5'-diphosphate + ATP = a ribonucleoside 5'-triphosphate + ADP. Its function is as follows. Major role in the synthesis of nucleoside triphosphates other than ATP. The ATP gamma phosphate is transferred to the NDP beta phosphate via a ping-pong mechanism, using a phosphorylated active-site intermediate. The protein is Nucleoside diphosphate kinase of Rhodopseudomonas palustris (strain HaA2).